A 265-amino-acid polypeptide reads, in one-letter code: AT-hook motif nuclear-localized protein 18 (265 aa).

Positions 1–75 are disordered; that stretch reads MDEVSRSHTP…AGSKNKPKAP (75 aa). The span at 19–30 shows a compositional bias: basic residues; sequence HYHHQNAGRQKR. Positions 59–71 form a DNA-binding region, a.T hook; sequence RRPRGRPAGSKNK. A PPC domain is found at 83–217; the sequence is ANAFRCHVME…EEEETEREID (135 aa).

The protein localises to the nucleus. Its function is as follows. Transcription factor that specifically binds AT-rich DNA sequences related to the nuclear matrix attachment regions (MARs). Acts redundantly with AHL22, AHL27 and AHL29 in the regulation of flowering and regulation of the hypocotyl elongation. The chain is AT-hook motif nuclear-localized protein 18 from Arabidopsis thaliana (Mouse-ear cress).